The primary structure comprises 130 residues: Small ribosomal subunit protein uS11 (130 aa).

Belongs to the universal ribosomal protein uS11 family. Part of the 30S ribosomal subunit. Interacts with proteins S7 and S18. Binds to IF-3.

In terms of biological role, located on the platform of the 30S subunit, it bridges several disparate RNA helices of the 16S rRNA. Forms part of the Shine-Dalgarno cleft in the 70S ribosome. The sequence is that of Small ribosomal subunit protein uS11 from Parasynechococcus marenigrum (strain WH8102).